The chain runs to 83 residues: Three-finger toxin MALT0058C (83 aa).

The first 21 residues, 1-21 (MKTLLLTLVVVTIVCLDFGHT), serve as a signal peptide directing secretion. 4 cysteine pairs are disulfide-bonded: C24/C45, C38/C62, C64/C75, and C76/C81.

It belongs to the three-finger toxin family. Short-chain subfamily. Type I alpha-neurotoxin sub-subfamily. As to expression, expressed by the venom gland.

It is found in the secreted. Functionally, binds to muscle nicotinic acetylcholine receptor (nAChR) and inhibits acetylcholine from binding to the receptor, thereby impairing neuromuscular transmission. The polypeptide is Three-finger toxin MALT0058C (Micrurus altirostris (Uruguayan coral snake)).